The following is a 590-amino-acid chain: Arginine--tRNA ligase (590 aa).

The 'HIGH' region signature appears at 131–141 (PNIAKEMHVGH).

Belongs to the class-I aminoacyl-tRNA synthetase family. Monomer.

Its subcellular location is the cytoplasm. The enzyme catalyses tRNA(Arg) + L-arginine + ATP = L-arginyl-tRNA(Arg) + AMP + diphosphate. The chain is Arginine--tRNA ligase from Synechococcus sp. (strain RCC307).